Reading from the N-terminus, the 91-residue chain is Small ribosomal subunit protein uS19 (91 aa).

This sequence belongs to the universal ribosomal protein uS19 family.

Protein S19 forms a complex with S13 that binds strongly to the 16S ribosomal RNA. The protein is Small ribosomal subunit protein uS19 of Neorickettsia sennetsu (strain ATCC VR-367 / Miyayama) (Ehrlichia sennetsu).